The following is a 337-amino-acid chain: DNA-directed RNA polymerase subunit alpha (337 aa).

The segment at 1-233 (MVREKVTVST…DLFIPFLHAQ (233 aa)) is alpha N-terminal domain (alpha-NTD). The alpha C-terminal domain (alpha-CTD) stretch occupies residues 267–337 (IALKYIFIDQ…FTVDLPKNKF (71 aa)).

The protein belongs to the RNA polymerase alpha chain family. In plastids the minimal PEP RNA polymerase catalytic core is composed of four subunits: alpha, beta, beta', and beta''. When a (nuclear-encoded) sigma factor is associated with the core the holoenzyme is formed, which can initiate transcription.

Its subcellular location is the plastid. The protein resides in the chloroplast. It catalyses the reaction RNA(n) + a ribonucleoside 5'-triphosphate = RNA(n+1) + diphosphate. Its function is as follows. DNA-dependent RNA polymerase catalyzes the transcription of DNA into RNA using the four ribonucleoside triphosphates as substrates. The protein is DNA-directed RNA polymerase subunit alpha of Platanus occidentalis (Sycamore).